The primary structure comprises 213 residues: Pyridoxine/pyridoxamine 5'-phosphate oxidase (213 aa).

FMN-binding positions include 60-65 (RMVLMK), 75-76 (YS), lysine 82, and glutamine 104. Lysine 65 serves as a coordination point for substrate. Tyrosine 122, arginine 126, and serine 130 together coordinate substrate. FMN is bound by residues 139–140 (QS) and tryptophan 184. 190–192 (RLH) is a binding site for substrate. Position 194 (arginine 194) interacts with FMN.

It belongs to the pyridoxamine 5'-phosphate oxidase family. As to quaternary structure, homodimer. FMN serves as cofactor.

It carries out the reaction pyridoxamine 5'-phosphate + O2 + H2O = pyridoxal 5'-phosphate + H2O2 + NH4(+). The catalysed reaction is pyridoxine 5'-phosphate + O2 = pyridoxal 5'-phosphate + H2O2. Its pathway is cofactor metabolism; pyridoxal 5'-phosphate salvage; pyridoxal 5'-phosphate from pyridoxamine 5'-phosphate: step 1/1. The protein operates within cofactor metabolism; pyridoxal 5'-phosphate salvage; pyridoxal 5'-phosphate from pyridoxine 5'-phosphate: step 1/1. Catalyzes the oxidation of either pyridoxine 5'-phosphate (PNP) or pyridoxamine 5'-phosphate (PMP) into pyridoxal 5'-phosphate (PLP). The polypeptide is Pyridoxine/pyridoxamine 5'-phosphate oxidase (Rhodopseudomonas palustris (strain BisB18)).